The following is a 491-amino-acid chain: Glutamate--tRNA ligase (491 aa).

The 'HIGH' region motif lies at 12-22 (PSPTGTPHVGL). The disordered stretch occupies residues 111-134 (STPEEVEERHKAAGRDPKLGYDNF). Residues 117–134 (EERHKAAGRDPKLGYDNF) show a composition bias toward basic and acidic residues. The 'KMSKS' region signature appears at 256–260 (KLSKR). Lysine 259 contributes to the ATP binding site.

This sequence belongs to the class-I aminoacyl-tRNA synthetase family. Glutamate--tRNA ligase type 1 subfamily. Monomer.

Its subcellular location is the cytoplasm. It carries out the reaction tRNA(Glu) + L-glutamate + ATP = L-glutamyl-tRNA(Glu) + AMP + diphosphate. Functionally, catalyzes the attachment of glutamate to tRNA(Glu) in a two-step reaction: glutamate is first activated by ATP to form Glu-AMP and then transferred to the acceptor end of tRNA(Glu). The polypeptide is Glutamate--tRNA ligase (Rhodococcus jostii (strain RHA1)).